The chain runs to 297 residues: N-acetylneuraminate lyase (297 aa).

Aceneuramate contacts are provided by S47 and T48. Residue Y137 is the Proton donor of the active site. K165 serves as the catalytic Schiff-base intermediate with substrate. T167, G189, D191, E192, and S208 together coordinate aceneuramate.

This sequence belongs to the DapA family. NanA subfamily. As to quaternary structure, homotetramer.

The protein resides in the cytoplasm. It carries out the reaction aceneuramate = aldehydo-N-acetyl-D-mannosamine + pyruvate. The protein operates within amino-sugar metabolism; N-acetylneuraminate degradation; D-fructose 6-phosphate from N-acetylneuraminate: step 1/5. Catalyzes the reversible aldol cleavage of N-acetylneuraminic acid (sialic acid; Neu5Ac) to form pyruvate and N-acetylmannosamine (ManNAc) via a Schiff base intermediate. This is N-acetylneuraminate lyase from Salmonella agona (strain SL483).